We begin with the raw amino-acid sequence, 294 residues long: Cytidine deaminase (294 aa).

CMP/dCMP-type deaminase domains lie at 48–168 and 187–294; these read DDDA…FGPT and AETD…RVTF. A substrate-binding site is contributed by 89–91; that stretch reads NME. Zn(2+) is bound at residue His-102. Catalysis depends on Glu-104, which acts as the Proton donor. Zn(2+) is bound by residues Cys-129 and Cys-132.

The protein belongs to the cytidine and deoxycytidylate deaminase family. As to quaternary structure, homodimer. It depends on Zn(2+) as a cofactor.

The catalysed reaction is cytidine + H2O + H(+) = uridine + NH4(+). The enzyme catalyses 2'-deoxycytidine + H2O + H(+) = 2'-deoxyuridine + NH4(+). Its function is as follows. This enzyme scavenges exogenous and endogenous cytidine and 2'-deoxycytidine for UMP synthesis. This is Cytidine deaminase from Yersinia pseudotuberculosis serotype O:1b (strain IP 31758).